We begin with the raw amino-acid sequence, 284 residues long: 4-hydroxybenzoate octaprenyltransferase (284 aa).

8 helical membrane-spanning segments follow: residues 18–38 (PIGTLLLLWPTLWALIIAAEG), 42–62 (WHVLLVFVLGVVLMRSAGCVI), 93–113 (IILFLLLGISSFLLVLTMNPL), 136–156 (HLPQLFLGLAFSWAIPMAWAA), 161–181 (LPWVVWFVFAINALWTIAYDT), 209–229 (LIIGLLQLLTLVMLVWLGLHY), 233–253 (QSFYWSVLAAGALFVYQQHLI), and 264–284 (AFLNNNYVGMVLALGLFVAFW).

The protein belongs to the UbiA prenyltransferase family. It depends on Mg(2+) as a cofactor.

Its subcellular location is the cell inner membrane. It carries out the reaction all-trans-octaprenyl diphosphate + 4-hydroxybenzoate = 4-hydroxy-3-(all-trans-octaprenyl)benzoate + diphosphate. The protein operates within cofactor biosynthesis; ubiquinone biosynthesis. Catalyzes the prenylation of para-hydroxybenzoate (PHB) with an all-trans polyprenyl group. Mediates the second step in the final reaction sequence of ubiquinone-8 (UQ-8) biosynthesis, which is the condensation of the polyisoprenoid side chain with PHB, generating the first membrane-bound Q intermediate 3-octaprenyl-4-hydroxybenzoate. In Vibrio vulnificus (strain CMCP6), this protein is 4-hydroxybenzoate octaprenyltransferase.